The primary structure comprises 85 residues: U4-theraphotoxin-Hhn1g (85 aa).

The N-terminal stretch at 1-22 (MKVTLIAILTCAAVLVLHTTAA) is a signal peptide. A propeptide spanning residues 23-48 (EELEAESQLMEVGMPDTELAAVDEER) is cleaved from the precursor. Cystine bridges form between Cys-52/Cys-66, Cys-56/Cys-77, and Cys-71/Cys-82.

It belongs to the neurotoxin 12 (Hwtx-2) family. 02 (Hwtx-2) subfamily. As to expression, expressed by the venom gland.

It localises to the secreted. Functionally, postsynaptic neurotoxin. This Cyriopagopus hainanus (Chinese bird spider) protein is U4-theraphotoxin-Hhn1g.